We begin with the raw amino-acid sequence, 102 residues long: Large ribosomal subunit protein bL21 (102 aa).

The protein belongs to the bacterial ribosomal protein bL21 family. As to quaternary structure, part of the 50S ribosomal subunit. Contacts protein L20.

In terms of biological role, this protein binds to 23S rRNA in the presence of protein L20. The protein is Large ribosomal subunit protein bL21 of Geotalea uraniireducens (strain Rf4) (Geobacter uraniireducens).